The following is a 100-amino-acid chain: Putative septation protein SpoVG (100 aa).

It belongs to the SpoVG family.

In terms of biological role, could be involved in septation. The sequence is that of Putative septation protein SpoVG from Clostridium novyi (strain NT).